The following is a 596-amino-acid chain: Heat shock factor protein 5 (596 aa).

The DNA-binding element occupies 10–200 (NPNNFPAKLW…FHRSFRRDSL (191 aa)). A disordered region spans residues 541–576 (EMGPASKPSEDTGLATPARYREHRSNSQQGKSPDLH). Ser572 bears the Phosphoserine mark.

The protein belongs to the HSF family. Homooligomer.

Its subcellular location is the nucleus. The protein resides in the chromosome. Its function is as follows. DNA-binding transcription factor that is essential for male fertility, spermatogenesis and meiotic prophase progression in spermatocytes under non-stress conditions. Positvely and negatively regulates gene expression to ensure progression of meiotic prophase beyond pachytene stage in spermatocytes. Plays a role in male germline meiotic sex chromosome remodeling and silencing through regulation of SMARCA4. The protein is Heat shock factor protein 5 (HSF5) of Homo sapiens (Human).